Reading from the N-terminus, the 306-residue chain is Probable protein ABIL1 (306 aa).

The tract at residues 200–236 is disordered; it reads KNSKTNGARQSEFVLEETKATKPASRGKEPSTSPLPK.

The protein belongs to the ABI family. In terms of assembly, binds SCAR.

It is found in the cytoplasm. Its subcellular location is the cytoskeleton. In terms of biological role, involved in regulation of actin and microtubule organization. Part of a WAVE complex that activates the Arp2/3 complex. The polypeptide is Probable protein ABIL1 (Oryza sativa subsp. japonica (Rice)).